The primary structure comprises 122 residues: UPF0231 protein VV1_1657 (122 aa).

The protein belongs to the UPF0231 family.

The chain is UPF0231 protein VV1_1657 from Vibrio vulnificus (strain CMCP6).